Reading from the N-terminus, the 283-residue chain is Transmembrane protein 45B (283 aa).

Transmembrane regions (helical) follow at residues 7–27 (HALP…KCPF), 55–75 (LIEG…EQFV), 99–119 (MYLF…SHHV), 121–141 (VGLD…LFYF), 153–173 (IHSL…MEVF), 187–207 (LAIL…PLSG), and 218–238 (IMFI…IVGI). The tract at residues 261–283 (GLRKSTSTDSSSQKALLQESDEE) is disordered. Residues 264-275 (KSTSTDSSSQKA) show a composition bias toward polar residues.

It belongs to the TMEM45 family.

Its subcellular location is the membrane. In Danio rerio (Zebrafish), this protein is Transmembrane protein 45B (tmem45b).